The following is a 35-amino-acid chain: Cycloamanide F proprotein (35 aa).

A propeptide spanning residues 1-10 is cleaved from the precursor; it reads MSDINATRLP. Residues 11 to 18 constitute a cross-link (cyclopeptide (Ile-Pro)); it reads IVGILGLP. Residues 19–35 constitute a propeptide that is removed on maturation; sequence CIGDDVNSTLTHGEDLC.

Belongs to the MSDIN fungal toxin family. In terms of processing, processed by the macrocyclase-peptidase enzyme POPB to yield a cyclic decapeptide. POPB first removes 10 residues from the N-terminus. Conformational trapping of the remaining peptide forces the enzyme to release this intermediate rather than proceed to macrocyclization. The enzyme rebinds the remaining peptide in a different conformation and catalyzes macrocyclization of the N-terminal 8 residues.

In terms of biological role, cyclic octapeptide that belongs to the MSDIN-like toxin family responsible for a large number of food poisoning cases and deaths. Cycloaminide E is structurally related to other cycloamanides that are non-toxic to mammals but show immunosuppressive activity. The polypeptide is Cycloamanide F proprotein (Amanita phalloides (Death cap)).